A 361-amino-acid polypeptide reads, in one-letter code: Large ribosomal subunit protein uL3 (361 aa).

Positions 339–361 (RPPKKKPPVQRPQITYVSVESKQ) are disordered. The span at 350–361 (PQITYVSVESKQ) shows a compositional bias: polar residues.

The protein belongs to the universal ribosomal protein uL3 family. As to quaternary structure, part of the 50S ribosomal subunit. Forms a cluster with proteins L14 and L24e.

In terms of biological role, one of the primary rRNA binding proteins, it binds directly near the 3'-end of the 23S rRNA, where it nucleates assembly of the 50S subunit. The protein is Large ribosomal subunit protein uL3 of Pyrococcus abyssi (strain GE5 / Orsay).